Reading from the N-terminus, the 251-residue chain is Triosephosphate isomerase (251 aa).

9-11 (NWK) contributes to the substrate binding site. The active-site Electrophile is histidine 95. The active-site Proton acceptor is the glutamate 167. Residues glycine 173, serine 213, and 234 to 235 (GG) each bind substrate.

Belongs to the triosephosphate isomerase family. Homodimer.

It localises to the cytoplasm. The catalysed reaction is D-glyceraldehyde 3-phosphate = dihydroxyacetone phosphate. The protein operates within carbohydrate biosynthesis; gluconeogenesis. It participates in carbohydrate degradation; glycolysis; D-glyceraldehyde 3-phosphate from glycerone phosphate: step 1/1. Its function is as follows. Involved in the gluconeogenesis. Catalyzes stereospecifically the conversion of dihydroxyacetone phosphate (DHAP) to D-glyceraldehyde-3-phosphate (G3P). This is Triosephosphate isomerase from Carboxydothermus hydrogenoformans (strain ATCC BAA-161 / DSM 6008 / Z-2901).